We begin with the raw amino-acid sequence, 262 residues long: Adenosylcobinamide-GDP ribazoletransferase (262 aa).

4 helical membrane passes run 43–63, 121–141, 145–165, and 195–215; these read PLAG…LGAI, VALI…LPLL, GGGV…VWHW, and GVIL…AVLL.

Belongs to the CobS family. It depends on Mg(2+) as a cofactor.

It is found in the cell inner membrane. The catalysed reaction is alpha-ribazole + adenosylcob(III)inamide-GDP = adenosylcob(III)alamin + GMP + H(+). The enzyme catalyses alpha-ribazole 5'-phosphate + adenosylcob(III)inamide-GDP = adenosylcob(III)alamin 5'-phosphate + GMP + H(+). The protein operates within cofactor biosynthesis; adenosylcobalamin biosynthesis; adenosylcobalamin from cob(II)yrinate a,c-diamide: step 7/7. Joins adenosylcobinamide-GDP and alpha-ribazole to generate adenosylcobalamin (Ado-cobalamin). Also synthesizes adenosylcobalamin 5'-phosphate from adenosylcobinamide-GDP and alpha-ribazole 5'-phosphate. This chain is Adenosylcobinamide-GDP ribazoletransferase, found in Sinorhizobium medicae (strain WSM419) (Ensifer medicae).